Consider the following 382-residue polypeptide: tRNA (guanine(37)-N(1))-methyltransferase (382 aa).

Residues H205, 243-244 (DL), 269-270 (DA), and N291 each bind S-adenosyl-L-methionine.

The protein belongs to the class I-like SAM-binding methyltransferase superfamily. TRM5/TYW2 family. As to quaternary structure, monomer.

Its subcellular location is the mitochondrion matrix. It is found in the nucleus. It localises to the cytoplasm. It catalyses the reaction guanosine(37) in tRNA + S-adenosyl-L-methionine = N(1)-methylguanosine(37) in tRNA + S-adenosyl-L-homocysteine + H(+). Specifically methylates the N1 position of guanosine-37 in various cytoplasmic and mitochondrial tRNAs. Methylation is not dependent on the nature of the nucleoside 5' of the target nucleoside. This is the first step in the biosynthesis of wybutosine (yW), a modified base adjacent to the anticodon of tRNAs and required for accurate decoding. The polypeptide is tRNA (guanine(37)-N(1))-methyltransferase (Entamoeba histolytica (strain ATCC 30459 / HM-1:IMSS / ABRM)).